The primary structure comprises 342 residues: Transmembrane protein 268 (342 aa).

The next 2 helical transmembrane spans lie at 106-126 (AFAVVFYVLVWANIYSTSQMF) and 133-153 (AGVLLATLAAFSLTLTLVLVF). The disordered stretch occupies residues 245–267 (VEGPEDLEDAPLLPSTPGPQERP).

As to quaternary structure, interacts with ITGAM; this interaction inhibits ITGAM degradation via the endosome-lysosome pathway. Interacts with ITGB4; this interaction prevents ITGB4 degradation.

Its subcellular location is the cell membrane. Functionally, stabilizes cell surface expression of ITGAM and participates in the adhesion and migration of phagocytes during bacterial clearance. The sequence is that of Transmembrane protein 268 from Mus musculus (Mouse).